The chain runs to 439 residues: Xylose isomerase (439 aa).

Active-site residues include His-101 and Asp-104. Residues Glu-232, Glu-268, His-271, Asp-296, Asp-307, Asp-309, and Asp-339 each coordinate Mg(2+).

It belongs to the xylose isomerase family. In terms of assembly, homotetramer. Requires Mg(2+) as cofactor.

It is found in the cytoplasm. It catalyses the reaction alpha-D-xylose = alpha-D-xylulofuranose. The polypeptide is Xylose isomerase (xylA) (Thermoanaerobacterium thermosaccharolyticum (strain ATCC 7956 / DSM 571 / NCIMB 9385 / NCA 3814 / NCTC 13789 / WDCM 00135 / 2032) (Clostridium thermosaccharolyticum)).